A 441-amino-acid polypeptide reads, in one-letter code: Ribosomal protein uS12 methylthiotransferase RimO (441 aa).

Positions 7-117 (PKVSFVSLGC…VLDAVHRALP (111 aa)) constitute an MTTase N-terminal domain. 6 residues coordinate [4Fe-4S] cluster: C16, C52, C81, C148, C152, and C155. The 238-residue stretch at 134-371 (LTPRHYAYLK…MARQQKISAR (238 aa)) folds into the Radical SAM core domain. Residues 374–440 (KRKVGTRQQV…AYDLHGSVAG (67 aa)) form the TRAM domain.

This sequence belongs to the methylthiotransferase family. RimO subfamily. [4Fe-4S] cluster is required as a cofactor.

Its subcellular location is the cytoplasm. It carries out the reaction L-aspartate(89)-[ribosomal protein uS12]-hydrogen + (sulfur carrier)-SH + AH2 + 2 S-adenosyl-L-methionine = 3-methylsulfanyl-L-aspartate(89)-[ribosomal protein uS12]-hydrogen + (sulfur carrier)-H + 5'-deoxyadenosine + L-methionine + A + S-adenosyl-L-homocysteine + 2 H(+). Functionally, catalyzes the methylthiolation of an aspartic acid residue of ribosomal protein uS12. In Rhodopseudomonas palustris (strain BisB18), this protein is Ribosomal protein uS12 methylthiotransferase RimO.